A 237-amino-acid polypeptide reads, in one-letter code: Purine nucleoside phosphorylase DeoD-type (237 aa).

His4 serves as a coordination point for a purine D-ribonucleoside. Phosphate contacts are provided by residues Gly20, Arg24, Arg43, and 87 to 90 (RVGT). Residues 179-181 (EME) and 203-204 (SD) contribute to the a purine D-ribonucleoside site. The Proton donor role is filled by Asp204.

This sequence belongs to the PNP/UDP phosphorylase family. As to quaternary structure, homohexamer; trimer of homodimers.

It catalyses the reaction a purine D-ribonucleoside + phosphate = a purine nucleobase + alpha-D-ribose 1-phosphate. It carries out the reaction a purine 2'-deoxy-D-ribonucleoside + phosphate = a purine nucleobase + 2-deoxy-alpha-D-ribose 1-phosphate. Functionally, catalyzes the reversible phosphorolytic breakdown of the N-glycosidic bond in the beta-(deoxy)ribonucleoside molecules, with the formation of the corresponding free purine bases and pentose-1-phosphate. The polypeptide is Purine nucleoside phosphorylase DeoD-type (Streptococcus pyogenes serotype M4 (strain MGAS10750)).